Reading from the N-terminus, the 342-residue chain is D-erythrose-4-phosphate dehydrogenase (342 aa).

Position 12–13 (12–13) interacts with NAD(+); that stretch reads RI. Residues 154–156, Arg-200, 213–214, and Arg-236 each bind substrate; these read SCT and TK. Catalysis depends on Cys-155, which acts as the Nucleophile. Asn-318 serves as a coordination point for NAD(+).

Belongs to the glyceraldehyde-3-phosphate dehydrogenase family. Epd subfamily. In terms of assembly, homotetramer.

Its subcellular location is the cytoplasm. It catalyses the reaction D-erythrose 4-phosphate + NAD(+) + H2O = 4-phospho-D-erythronate + NADH + 2 H(+). The protein operates within cofactor biosynthesis; pyridoxine 5'-phosphate biosynthesis; pyridoxine 5'-phosphate from D-erythrose 4-phosphate: step 1/5. Catalyzes the NAD-dependent conversion of D-erythrose 4-phosphate to 4-phosphoerythronate. The sequence is that of D-erythrose-4-phosphate dehydrogenase from Klebsiella pneumoniae (strain 342).